Reading from the N-terminus, the 113-residue chain is UPF0416 protein RF_0879 (113 aa).

Belongs to the UPF0416 family.

The polypeptide is UPF0416 protein RF_0879 (Rickettsia felis (strain ATCC VR-1525 / URRWXCal2) (Rickettsia azadi)).